The chain runs to 357 residues: H-2 class I histocompatibility antigen, D-37 alpha chain (357 aa).

An N-terminal signal peptide occupies residues 1–20; that stretch reads MLLFAHLLQLLVSATVPTQS. The interval 21–110 is alpha-1; it reads SPHSLRYFTT…LLGYYNQSND (90 aa). Over 21-304 the chain is Extracellular; it reads SPHSLRYFTT…EPPPSTVSNM (284 aa). A glycan (N-linked (GlcNAc...) asparagine) is linked at Asn106. An alpha-2 region spans residues 111 to 202; sequence ESHTLQWMYG…RLGNETLQRS (92 aa). A disulfide bridge links Cys121 with Cys184. Asn196 carries an N-linked (GlcNAc...) asparagine glycan. An alpha-3 region spans residues 203 to 294; that stretch reads DPPKAHVTHH…GLPEPLTLRW (92 aa). Residues 205–293 form the Ig-like C1-type domain; sequence PKAHVTHHPR…EGLPEPLTLR (89 aa). An intrachain disulfide couples Cys223 to Cys279. The tract at residues 295–304 is connecting peptide; that stretch reads EPPPSTVSNM. Residues 305-327 traverse the membrane as a helical segment; sequence VIIAVLVVLGAVIILGAVVAFVM. Residues 328–357 lie on the Cytoplasmic side of the membrane; sequence KRRRHIGVKGCYAHVLGSKSFQTSDWPQKA. Ser347 carries the phosphoserine modification.

This sequence belongs to the MHC class I family. As to quaternary structure, heterodimer of an alpha chain and a beta chain (beta-2-microglobulin).

The protein resides in the membrane. In terms of biological role, involved in the presentation of foreign antigens to the immune system. The protein is H-2 class I histocompatibility antigen, D-37 alpha chain (H2-T23) of Mus musculus (Mouse).